The following is a 280-amino-acid chain: UPF0276 protein NGO_1946 (280 aa).

Belongs to the UPF0276 family.

The sequence is that of UPF0276 protein NGO_1946 from Neisseria gonorrhoeae (strain ATCC 700825 / FA 1090).